Reading from the N-terminus, the 284-residue chain is Two-pore potassium channel 4 (284 aa).

The disordered stretch occupies residues 1–21; sequence MEEENLLNENLLHPNESSPEE. The Cytoplasmic segment spans residues 1 to 31; it reads MEEENLLNENLLHPNESSPEETQVTTVSKSK. The helical transmembrane segment at 32–52 threads the bilayer; it reads WTILVLAMILLLVYLTFGVCT. Positions 70 to 89 form an intramembrane region, pore-forming; it reads DAFYFSIVTFSTVGYGDIVP. The helical transmembrane segment at 93–113 threads the bilayer; it reads TTKILTIVLVSTGVVFLDYLL. Over 114 to 156 the chain is Cytoplasmic; it reads NRVVSHVLSLQENAILDRINKTRNRAIRDHIAEDGKIRLKWKL. The helical transmembrane segment at 157-177 threads the bilayer; it reads CLAFCAVGLCVGSGALFLHVF. Positions 184 to 203 form an intramembrane region, pore-forming; that stretch reads DSVYLSVISVTTVGYGDKTF. A helical membrane pass occupies residues 211–231; the sequence is FAVFWLLLSTIAMATLFLYLA. Residues 232–284 lie on the Cytoplasmic side of the membrane; that stretch reads EMRIDRTTVMKLPPSESEFIVFKLRESGRISEDDIKQIVREFENLEEVPSSGS.

It belongs to the two pore domain potassium channel (TC 1.A.1.7) family. In terms of assembly, homodimer. Predominantly expressed in pollen.

The protein resides in the cell membrane. Functionally, voltage-independent, instantaneously activating, potassium-selective plasma membrane ion channel. Open rectifier. Regulated by cytoplasmic pH and extra-cellular calcium. Has some permeability for Rb(+) and NH(4)(+), but none for Na(+) or Li(+). This Arabidopsis thaliana (Mouse-ear cress) protein is Two-pore potassium channel 4 (TPK4).